The sequence spans 249 residues: Aquaporin TIP4-1 (249 aa).

M1 is modified (N-acetylmethionine). Topologically, residues 1–20 (MKKIELGHHSEAAKPDCIKA) are cytoplasmic. At K3 the chain carries N6,N6-dimethyllysine. The helical transmembrane segment at 21-41 (LIVEFITTFLFVFAGVGSAMA) threads the bilayer. The Vacuolar portion of the chain corresponds to 42–49 (TDSLVGNT). The chain crosses the membrane as a helical span at residues 50–70 (LVGLFAVAVAHAFVVAVMISA). Over 71–105 (GHISGGHLNPAVTLGLLLGGHISVFRAFLYWIDQL) the chain is Cytoplasmic. The NPA 1 motif lies at 79-81 (NPA). The helical transmembrane segment at 106–126 (LASSAACFLLSYLTGGMGTPV) threads the bilayer. The Vacuolar segment spans residues 127-137 (HTLASGVSYTQ). A helical membrane pass occupies residues 138–158 (GIIWEIILTFSLLFTVYATIV). The Cytoplasmic segment spans residues 159–166 (DPKKGSLD). The chain crosses the membrane as a helical span at residues 167–187 (GFGPLLTGFVVGANILAGGAF). Over 188-212 (SGASMNPARSFGPALVSGNWTDHWV) the chain is Vacuolar. Residues 193 to 195 (NPA) carry the NPA 2 motif. A helical transmembrane segment spans residues 213–233 (YWVGPLIGGGLAGFIYENVLI). Topologically, residues 234–249 (DRPHVPVADDEQPLLN) are cytoplasmic.

It belongs to the MIP/aquaporin (TC 1.A.8) family. TIP (TC 1.A.8.10) subfamily. In terms of tissue distribution, expressed in roots.

It is found in the vacuole membrane. In terms of biological role, aquaporins facilitate the transport of water and small neutral solutes across cell membranes. Transports urea in yeast cells in a pH-independent manner. The chain is Aquaporin TIP4-1 (TIP4-1) from Arabidopsis thaliana (Mouse-ear cress).